Consider the following 495-residue polypeptide: Thiosulfate sulfurtransferase/rhodanese-like domain-containing protein 2 (495 aa).

At S268 the chain carries Phosphoserine. The Rhodanese domain occupies 300–395 (EQGNTIILDC…YLEEFPDGFY (96 aa)). Residue C354 is the Cysteine persulfide intermediate of the active site.

This Mus musculus (Mouse) protein is Thiosulfate sulfurtransferase/rhodanese-like domain-containing protein 2 (Tstd2).